A 651-amino-acid polypeptide reads, in one-letter code: Maternal embryonic leucine zipper kinase (651 aa).

A Protein kinase domain is found at 11 to 263; it reads YELHETIGTG…MKNLLNHPWI (253 aa). ATP-binding positions include 17–25 and Lys40; that span reads IGTGGFAKV. A Phosphothreonine; by autocatalysis modification is found at Thr56. Asp132 serves as the catalytic Proton acceptor. Tyr163 carries the post-translational modification Phosphotyrosine; by autocatalysis. Thr167 carries the phosphothreonine; by autocatalysis modification. A phosphoserine; by autocatalysis mark is found at Ser171 and Ser253. Residues 282–321 form a UBA-like region; the sequence is LDDDCVTELSVHHRNNRQTMEDLISLWQYDHLTATYLLLL. The segment at 326–651 is autoinhibitory region; that stretch reads RGKPVRLRLS…VEDILSSCKV (326 aa). 3 positions are modified to phosphoserine; by autocatalysis: Ser336, Ser343, and Ser356. Tyr367 bears the Phosphotyrosine mark. Ser391 is subject to Phosphoserine; by autocatalysis. Thr398 carries the phosphothreonine; by autocatalysis modification. Position 407 is a phosphoserine; by autocatalysis (Ser407). Thr409 is subject to Phosphothreonine. At Ser431 the chain carries Phosphoserine; by autocatalysis. Thr478 is modified (phosphothreonine). Residue Thr494 is modified to Phosphothreonine; by autocatalysis. Ser498 is modified (phosphoserine). Ser505 is subject to Phosphoserine; by autocatalysis. A Phosphothreonine modification is found at Thr518. Residue Ser529 is modified to Phosphoserine; by autocatalysis. Ser529 is subject to Phosphoserine. Thr539 carries the post-translational modification Phosphothreonine; by autocatalysis. One can recognise a KA1 domain in the interval 602 to 651; that stretch reads SDFGKVTMQFELEVCQLQKPDVVGIRRQRLKGDAWVYKRLVEDILSSCKV.

This sequence belongs to the protein kinase superfamily. CAMK Ser/Thr protein kinase family. SNF1 subfamily. As to quaternary structure, monomer. Interacts with ZNF622 and PPP1R8. In terms of processing, autophosphorylated: autophosphorylation of the T-loop at Thr-167 and Ser-171 is required for activation. Thr-478 phosphorylation during mitosis promotes interaction with PPP1R8. As to expression, expressed in placenta, kidney, thymus, testis, ovary and intestine.

Its subcellular location is the cell membrane. It carries out the reaction L-tyrosyl-[protein] + ATP = O-phospho-L-tyrosyl-[protein] + ADP + H(+). The catalysed reaction is L-seryl-[protein] + ATP = O-phospho-L-seryl-[protein] + ADP + H(+). The enzyme catalyses L-threonyl-[protein] + ATP = O-phospho-L-threonyl-[protein] + ADP + H(+). Activated by autophosphorylation of the T-loop at Thr-167 and Ser-171: in contrast to other members of the SNF1 subfamily, phosphorylation at Thr-167 is not mediated by STK11/LKB1 but via autophosphorylation instead. Inhibited by calcium-binding. Kinase activity is also regulated by reducing agents: dithiothreitol (DTT) or reduced glutathione are required for kinase activity in vitro; such dependence is however not due to the presence of disulfide bonds. Its function is as follows. Serine/threonine-protein kinase involved in various processes such as cell cycle regulation, self-renewal of stem cells, apoptosis and splicing regulation. Has a broad substrate specificity; phosphorylates BCL2L14, CDC25B, MAP3K5/ASK1 and ZNF622. Acts as an activator of apoptosis by phosphorylating and activating MAP3K5/ASK1. Acts as a regulator of cell cycle, notably by mediating phosphorylation of CDC25B, promoting localization of CDC25B to the centrosome and the spindle poles during mitosis. Plays a key role in cell proliferation and carcinogenesis. Required for proliferation of embryonic and postnatal multipotent neural progenitors. Phosphorylates and inhibits BCL2L14, possibly leading to affect mammary carcinogenesis by mediating inhibition of the pro-apoptotic function of BCL2L14. Also involved in the inhibition of spliceosome assembly during mitosis by phosphorylating ZNF622, thereby contributing to its redirection to the nucleus. May also play a role in primitive hematopoiesis. In Homo sapiens (Human), this protein is Maternal embryonic leucine zipper kinase (MELK).